Consider the following 92-residue polypeptide: Small nuclear ribonucleoprotein E (92 aa).

A Sm domain is found at 18–92 (INLIFRYLQN…NITLLQSVSN (75 aa)).

The protein belongs to the snRNP Sm proteins family. In terms of assembly, core component of the spliceosomal U1, U2, U4 and U5 small nuclear ribonucleoproteins (snRNPs), the building blocks of the spliceosome. Most spliceosomal snRNPs contain a common set of Sm proteins, snrpb, snrpd1, snrpd2, snrpd3, snrpe, snrpf and snrpg that assemble in a heptameric protein ring on the Sm site of the small nuclear RNA to form the core snRNP. Component of the U1 snRNP. The U1 snRNP is composed of the U1 snRNA and the 7 core Sm proteins snrpb, snrpd1, snrpd2, snrpd3, snrpe, snrpf and snrpg, and at least three U1 snRNP-specific proteins snrnp70/u1-70k, snrpa/u1-a and snrpc/u1-c. Component of the U4/U6-U5 tri-snRNP complex composed of the U4, U6 and U5 snRNAs and at least prpf3, prpf4, prpf6, prpf8, prpf31, snrnp200, txnl4a, snrnp40, snrpb, snrpd1, snrpd2, snrpd3, snrpe, snrpf, snrpg, ddx23, cd2bp2, ppih, snu13, eftud2, sart1 and usp39, plus lsm2, lsm3, lsm4, lsm5, lsm6, lsm7 and lsm8. Component of the U7 snRNP complex, or U7 Sm protein core complex, that is composed of the U7 snRNA and at least lsm10, lsm11, snrpb, snrpd3, snrpe, snrpf and snrpg; the complex does not contain snrpd1 and snrpd2. Component of the minor spliceosome, which splices U12-type introns. Part of the SMN-Sm complex that contains smn1, gemin2/sip1, ddx20/gemin3, gemin4, gemin5, gemin6, gemin7, gemin8, strap/unrip and the Sm proteins snrpb, snrpd1, snrpd2, snrpd3, snrpe, snrpf and snrpg; catalyzes core snRNPs assembly. Forms a 6S pICln-Sm complex composed of clns1a/pICln, snrpd1, snrpd2, snrpe, snrpf and snrpg; ring-like structure where clns1a/pICln mimics additional Sm proteins and which is unable to assemble into the core snRNP.

It is found in the cytoplasm. Its subcellular location is the cytosol. The protein resides in the nucleus. Its function is as follows. Plays a role in pre-mRNA splicing as a core component of the spliceosomal U1, U2, U4 and U5 small nuclear ribonucleoproteins (snRNPs), the building blocks of the spliceosome. Component of both the pre-catalytic spliceosome B complex and activated spliceosome C complexes. As a component of the minor spliceosome, involved in the splicing of U12-type introns in pre-mRNAs. As part of the U7 snRNP it is involved in histone 3'-end processing. This chain is Small nuclear ribonucleoprotein E (snrpe), found in Danio rerio (Zebrafish).